A 335-amino-acid chain; its full sequence is MKLKLKNVFLAYFLVSIAGLLYALVQLGQPCDCLPPLRAAAEQLRQKDLRISQLQAELRRPPPAPAQPPEPEALPTIYVVTPTYARLVQKAELVRLSQTLSLVPRLHWLLVEDAEGPTPLVSGLLAASGLLFTHLVVLTPKAQRLREGEPGWVHPRGVEQRNKALDWLRGRGGAVGGEKDPPPPGTQGVVYFADDDNTYSRELFEEMRWTRGVSVWPVGLVGGLRFEGPQVQDGRVVGFHTAWEPSRPFPVDMAGFAVALPLLLDKPNAQFDSTAPRGHLESSLLSHLVDPKDLEPRAANCTRVLVWHTRTEKPKMKQEEQLQRQGRGSDPAIEV.

Over M1–N7 the chain is Cytoplasmic. A helical; Signal-anchor for type II membrane protein membrane pass occupies residues V8–G28. The Lumenal portion of the chain corresponds to Q29–V335. UDP-alpha-D-glucuronate-binding positions include P82–Y84, D113, R156, R161, and D194–D196. D196 is a binding site for Mn(2+). Positions W243–D252 are interaction with galactose moiety of substrate glycoprotein. E281 (proton donor/acceptor) is an active-site residue. N300 carries an N-linked (GlcNAc...) asparagine glycan. Residue H308–R310 coordinates UDP-alpha-D-glucuronate. Over residues E312–L322 the composition is skewed to basic and acidic residues. The disordered stretch occupies residues E312–V335.

The protein belongs to the glycosyltransferase 43 family. As to quaternary structure, homodimer; disulfide-linked. Interacts with PXYLP1; the interaction increases the 2-phosphoxylose phosphatase activity of PXYLP1 during completion of linkage region formation in a B3GAT3-mediated manner. The cofactor is Mn(2+). N-glycosylated. In terms of tissue distribution, ubiquitous (but weakly expressed in all tissues examined).

The protein localises to the golgi apparatus membrane. It is found in the golgi apparatus. It localises to the cis-Golgi network. It catalyses the reaction 3-O-(beta-D-galactosyl-(1-&gt;3)-beta-D-galactosyl-(1-&gt;4)-beta-D-xylosyl)-L-seryl-[protein] + UDP-alpha-D-glucuronate = 3-O-(beta-D-GlcA-(1-&gt;3)-beta-D-Gal-(1-&gt;3)-beta-D-Gal-(1-&gt;4)-beta-D-Xyl)-L-seryl-[protein] + UDP + H(+). It functions in the pathway protein modification; protein glycosylation. With respect to regulation, inhibited by EDTA. Functionally, glycosaminoglycans biosynthesis. Involved in forming the linkage tetrasaccharide present in heparan sulfate and chondroitin sulfate. Transfers a glucuronic acid moiety from the uridine diphosphate-glucuronic acid (UDP-GlcUA) to the common linkage region trisaccharide Gal-beta-1,3-Gal-beta-1,4-Xyl covalently bound to a Ser residue at the glycosaminylglycan attachment site of proteoglycans. Can also play a role in the biosynthesis of l2/HNK-1 carbohydrate epitope on glycoproteins. Shows strict specificity for Gal-beta-1,3-Gal-beta-1,4-Xyl, exhibiting negligible incorporation into other galactoside substrates including Galbeta1-3Gal beta1-O-benzyl, Galbeta1-4GlcNAc and Galbeta1-4Glc. Stimulates 2-phosphoxylose phosphatase activity of PXYLP1 in presence of uridine diphosphate-glucuronic acid (UDP-GlcUA) during completion of linkage region formation. The sequence is that of Galactosylgalactosylxylosylprotein 3-beta-glucuronosyltransferase 3 (B3GAT3) from Homo sapiens (Human).